A 396-amino-acid chain; its full sequence is MPRVKAAQAGRQGPAKRRLAEHFAAGEIITDMNKKEWKLGSPIGQGGFGCIYLADMNSSKSVGNDAPCVVKVEPSDNGPLFTELKFYQRAAKPEQIQKWIRTHKLKYLGVPKYWGSGLHDKNGKSYRFMIIDRFGSDLQKIYEANAKRFSRKTVLQLSLRILDILEYIHEHEYVHGDIKASNLLLSYKNPDQVYLVDYGLAYRYCPEGTHKEYKEDPKRCHDGTVEFTSIDAHNGVAPSRRGDLEILGYCMIQWLSGHLPWEDNLKDPNYVRDSKIRYRENIASLMDKCFPEKNKPDEIAKYMETVKLLDYVEKPLYQKLRDILLQGLKAIGSKDDGKLDLTVVENGSLKAKPVAKKRKKEAEESVESSVEDMECSDKQTEEATQTRSKTRKRVQK.

One can recognise a Protein kinase domain in the interval 37-317; it reads WKLGSPIGQG…LLDYVEKPLY (281 aa). ATP-binding positions include 43 to 51 and K71; that span reads IGQGGFGCI. K71 is covalently cross-linked (Glycyl lysine isopeptide (Lys-Gly) (interchain with G-Cter in SUMO2)). The active-site Proton acceptor is the D177. The interval 352 to 396 is disordered; sequence KPVAKKRKKEAEESVESSVEDMECSDKQTEEATQTRSKTRKRVQK. Residues 364-374 show a composition bias toward acidic residues; the sequence is ESVESSVEDME. S376 carries the post-translational modification Phosphoserine. The segment at 387–393 is required for interaction with the nucleosome; sequence RSKTRKR.

This sequence belongs to the protein kinase superfamily. CK1 Ser/Thr protein kinase family. VRK subfamily. Interacts with HDAC1, KAT2B, SETDB1, KDM3A and KDM4A. Associates with the nucleosome through interactions with nucleosome DNA, histone H2A and histone H2B; the interaction with H2A and H2B is mediated by the nucleosome acidic patch, a cluster of negatively charged residues of H2A and H2B forming a cleft within the nucleosome core. Post-translationally, autophosphorylated at various serine and threonine residues. Autophosphorylation does not impair its ability to phosphorylate p53/TP53. Phosphorylation by PLK3 leads to induction of Golgi fragmentation during mitosis.

Its subcellular location is the nucleus. It is found in the cytoplasm. The protein resides in the cajal body. The enzyme catalyses L-seryl-[protein] + ATP = O-phospho-L-seryl-[protein] + ADP + H(+). It carries out the reaction L-threonyl-[protein] + ATP = O-phospho-L-threonyl-[protein] + ADP + H(+). With respect to regulation, active in presence of Mn(2+), Mg(2+) and Zn(2+), but is not functional with Ca(2+) or Cu(2+). Has a higher affinity for Mn(2+) than for Mg(2+). RAN inhibits its autophosphorylation and its ability to phosphorylate histone H3. In terms of biological role, serine/threonine kinase involved in the regulation of key cellular processes including the cell cycle, nuclear condensation, transcription regulation, and DNA damage response. Controls chromatin organization and remodeling by mediating phosphorylation of histone H3 on 'Thr-4' and histone H2AX (H2aXT4ph). It also phosphorylates KAT5 in response to DNA damage, promoting KAT5 association with chromatin and histone acetyltransferase activity. Is involved in the regulation of cell cycle progression of neural progenitors, and is required for proper cortical neuronal migration. Is involved in neurite elongation and branching in motor neurons, and has an essential role in Cajal bodies assembly, acting through COIL phosphorylation and the control of coilin degradation. Involved in Golgi disassembly during the cell cycle: following phosphorylation by PLK3 during mitosis, it is required to induce Golgi fragmentation. Phosphorylates BANF1: disrupts its ability to bind DNA, reduces its binding to LEM domain-containing proteins and causes its relocalization from the nucleus to the cytoplasm. Phosphorylates TP53BP1 and p53/TP53 on 'Thr-18', preventing the interaction between p53/TP53 and MDM2. Phosphorylates ATF2 which activates its transcriptional activity. Phosphorylates JUN. The polypeptide is Serine/threonine-protein kinase VRK1 (VRK1) (Bos taurus (Bovine)).